The following is a 547-amino-acid chain: Chaperonin GroEL (547 aa).

Residues 30–33, lysine 51, 87–91, glycine 415, 479–481, and aspartate 495 contribute to the ATP site; these read TLGP, DGTTT, and NAA.

This sequence belongs to the chaperonin (HSP60) family. As to quaternary structure, forms a cylinder of 14 subunits composed of two heptameric rings stacked back-to-back. Interacts with the co-chaperonin GroES.

Its subcellular location is the cytoplasm. The enzyme catalyses ATP + H2O + a folded polypeptide = ADP + phosphate + an unfolded polypeptide.. Together with its co-chaperonin GroES, plays an essential role in assisting protein folding. The GroEL-GroES system forms a nano-cage that allows encapsulation of the non-native substrate proteins and provides a physical environment optimized to promote and accelerate protein folding. This is Chaperonin GroEL from Pseudomonas putida (strain GB-1).